The chain runs to 891 residues: Fanconi-associated nuclease 1 homolog (891 aa).

Mn(2+) contacts are provided by Glu712, Asp833, Glu852, and Val853. The VRR-NUC domain maps to 770–884; that stretch reads GMAEEILIIS…GFNVEICKVR (115 aa).

Belongs to the FAN1 family. Mn(2+) serves as cofactor. It depends on Mg(2+) as a cofactor.

The protein localises to the nucleus. The catalysed reaction is Hydrolytically removes 5'-nucleotides successively from the 3'-hydroxy termini of 3'-hydroxy-terminated oligonucleotides.. In terms of biological role, nuclease required for the repair of DNA interstrand cross-links (ICLs). Acts as a 5'-3' exonuclease that anchors at a cut end of DNA and cleaves DNA successively at every third nucleotide, allowing to excise an ICL from one strand through flanking incisions. May act upstream of the helicase RECQL4A and the ATPase RAD5A, which is involved in error-free post-replicative repair. Functions independently of MUS81 pathway, but in a similar pathway with RECQ4A, RAD5A and MFH1 in ICL repair. This is Fanconi-associated nuclease 1 homolog from Arabidopsis thaliana (Mouse-ear cress).